The following is a 1297-amino-acid chain: Phosphoribosylformylglycinamidine synthase (1297 aa).

The interval 303–329 (ISPFPGAATGSGGEIRDEGATGRGAKP) is disordered. 308–319 (GAATGSGGEIRD) is a binding site for ATP. Residues D680, E719, N723, and D887 each coordinate Mg(2+). S889 serves as a coordination point for ATP. One can recognise a Glutamine amidotransferase type-1 domain in the interval 1045-1297 (IAILREQGVN…RLFRNARMVF (253 aa)). C1138 functions as the Nucleophile in the catalytic mechanism. Active-site residues include H1263 and E1265.

The protein in the N-terminal section; belongs to the FGAMS family. As to quaternary structure, monomer.

It is found in the cytoplasm. The catalysed reaction is N(2)-formyl-N(1)-(5-phospho-beta-D-ribosyl)glycinamide + L-glutamine + ATP + H2O = 2-formamido-N(1)-(5-O-phospho-beta-D-ribosyl)acetamidine + L-glutamate + ADP + phosphate + H(+). Its pathway is purine metabolism; IMP biosynthesis via de novo pathway; 5-amino-1-(5-phospho-D-ribosyl)imidazole from N(2)-formyl-N(1)-(5-phospho-D-ribosyl)glycinamide: step 1/2. In terms of biological role, phosphoribosylformylglycinamidine synthase involved in the purines biosynthetic pathway. Catalyzes the ATP-dependent conversion of formylglycinamide ribonucleotide (FGAR) and glutamine to yield formylglycinamidine ribonucleotide (FGAM) and glutamate. This Haemophilus influenzae (strain 86-028NP) protein is Phosphoribosylformylglycinamidine synthase.